The primary structure comprises 312 residues: Pantothenate kinase (312 aa).

Residue 97–104 (GSVAVGKS) participates in ATP binding.

The protein belongs to the prokaryotic pantothenate kinase family.

Its subcellular location is the cytoplasm. It carries out the reaction (R)-pantothenate + ATP = (R)-4'-phosphopantothenate + ADP + H(+). The protein operates within cofactor biosynthesis; coenzyme A biosynthesis; CoA from (R)-pantothenate: step 1/5. The sequence is that of Pantothenate kinase from Mycolicibacterium gilvum (strain PYR-GCK) (Mycobacterium gilvum (strain PYR-GCK)).